We begin with the raw amino-acid sequence, 440 residues long: Chitinase-like protein Idgf2 (440 aa).

The N-terminal stretch at 1 to 20 (MKAWIWFTFVACLFAASTEA) is a signal peptide. The region spanning 22–440 (SNLVCYYDSS…PILRAIKYRL (419 aa)) is the GH18 domain. Cysteine 26 and cysteine 53 are oxidised to a cystine. Asparagine 220 carries N-linked (GlcNAc...) asparagine glycosylation. Cysteine 342 and cysteine 425 are disulfide-bonded.

This sequence belongs to the glycosyl hydrolase 18 family. IDGF subfamily. In terms of processing, glycosylated. As to expression, primarily expressed in yolk cells and fat body. In larvae, it is expressed in the imaginal ring and weakly expressed in imaginal disks. More strongly expressed than Idgf1 and Idgf3.

It localises to the secreted. Its function is as follows. Cooperates with insulin-like peptides to stimulate the proliferation, polarization and motility of imaginal disk cells. May act by stabilizing the binding of insulin-like peptides to its receptor through a simultaneous interaction with both molecules to form a multiprotein signaling complex. In Drosophila melanogaster (Fruit fly), this protein is Chitinase-like protein Idgf2 (Idgf2).